Consider the following 714-residue polypeptide: T-cell activation Rho GTPase-activating protein (714 aa).

In terms of domain architecture, Rho-GAP spans 88–277 (QPLSIICGEN…FLIDNCFEIF (190 aa)). Disordered stretches follow at residues 290–357 (DDSL…ESSV), 370–419 (QDRR…AEDP), 451–508 (QGHI…HSMS), 520–563 (RTSS…QSQT), and 623–650 (KPST…HRLS). Residues 299–311 (SDVSTLQNDSAYD) show a composition bias toward polar residues. Ser-398 is subject to Phosphoserine. The segment covering 459–471 (SRSSPGESLGSSP) has biased composition (low complexity). 2 stretches are compositionally biased toward basic and acidic residues: residues 492–501 (KTDKTKPQRE) and 527–545 (EKSK…RKES).

Highly expressed in testis.

Functionally, may function as a GTPase-activating protein. May play a role in transmission ratio distortion (TRD) in mouse, in which heterozygous males for t-locus transmit their t-carrying chromosome to 95% or more of their offspring. The sequence is that of T-cell activation Rho GTPase-activating protein (Tagap) from Mus musculus (Mouse).